Consider the following 241-residue polypeptide: 3-deoxy-manno-octulosonate cytidylyltransferase (241 aa).

Belongs to the KdsB family.

The protein localises to the cytoplasm. It carries out the reaction 3-deoxy-alpha-D-manno-oct-2-ulosonate + CTP = CMP-3-deoxy-beta-D-manno-octulosonate + diphosphate. It functions in the pathway nucleotide-sugar biosynthesis; CMP-3-deoxy-D-manno-octulosonate biosynthesis; CMP-3-deoxy-D-manno-octulosonate from 3-deoxy-D-manno-octulosonate and CTP: step 1/1. It participates in bacterial outer membrane biogenesis; lipopolysaccharide biosynthesis. Functionally, activates KDO (a required 8-carbon sugar) for incorporation into bacterial lipopolysaccharide in Gram-negative bacteria. This Rickettsia typhi (strain ATCC VR-144 / Wilmington) protein is 3-deoxy-manno-octulosonate cytidylyltransferase.